Here is a 150-residue protein sequence, read N- to C-terminus: D-aminoacyl-tRNA deacylase (150 aa).

The short motif at 138 to 139 is the Gly-cisPro motif, important for rejection of L-amino acids element; it reads GP.

The protein belongs to the DTD family. As to quaternary structure, homodimer.

Its subcellular location is the cytoplasm. It catalyses the reaction glycyl-tRNA(Ala) + H2O = tRNA(Ala) + glycine + H(+). The enzyme catalyses a D-aminoacyl-tRNA + H2O = a tRNA + a D-alpha-amino acid + H(+). Its function is as follows. An aminoacyl-tRNA editing enzyme that deacylates mischarged D-aminoacyl-tRNAs. Also deacylates mischarged glycyl-tRNA(Ala), protecting cells against glycine mischarging by AlaRS. Acts via tRNA-based rather than protein-based catalysis; rejects L-amino acids rather than detecting D-amino acids in the active site. By recycling D-aminoacyl-tRNA to D-amino acids and free tRNA molecules, this enzyme counteracts the toxicity associated with the formation of D-aminoacyl-tRNA entities in vivo and helps enforce protein L-homochirality. This is D-aminoacyl-tRNA deacylase from Bacteroides fragilis (strain ATCC 25285 / DSM 2151 / CCUG 4856 / JCM 11019 / LMG 10263 / NCTC 9343 / Onslow / VPI 2553 / EN-2).